We begin with the raw amino-acid sequence, 242 residues long: Probable transcriptional regulatory protein EF_0663 (242 aa).

Over residues 1 to 14 (MSGHSKWSNIQGRK) the composition is skewed to polar residues. The tract at residues 1-22 (MSGHSKWSNIQGRKNAQDAKRG) is disordered.

It belongs to the TACO1 family.

It localises to the cytoplasm. This chain is Probable transcriptional regulatory protein EF_0663, found in Enterococcus faecalis (strain ATCC 700802 / V583).